A 545-amino-acid polypeptide reads, in one-letter code: Hsk1-interacting molecule 1 (545 aa).

The DBF4-type zinc-finger motif lies at 492 to 541; that stretch reads VDAKPGYCENCREKFDNFESHIRSSRHRRFAENNDNFKDLDELFALVQRP. The Zn(2+) site is built by cysteine 499, cysteine 502, histidine 512, and histidine 518.

In terms of assembly, associates with hsk1. Interacts with mcm10. Hyperphosphorylated at the G1/S and S-phases of the cell cycle.

It is found in the nucleus. In terms of biological role, activates hsk1 kinase and is essential for G1/S transition. Has a role in S-phase checkpoint control induced by replication fork blocks after nucleotide deprivation and DNA damage. In Schizosaccharomyces pombe (strain 972 / ATCC 24843) (Fission yeast), this protein is Hsk1-interacting molecule 1 (him1).